Here is a 94-residue protein sequence, read N- to C-terminus: Small ribosomal subunit protein uS19 (94 aa).

It belongs to the universal ribosomal protein uS19 family.

In terms of biological role, protein S19 forms a complex with S13 that binds strongly to the 16S ribosomal RNA. The protein is Small ribosomal subunit protein uS19 of Nitrosomonas eutropha (strain DSM 101675 / C91 / Nm57).